The chain runs to 327 residues: Phenylalanine--tRNA ligase alpha subunit (327 aa).

Glu-252 is a binding site for Mg(2+).

This sequence belongs to the class-II aminoacyl-tRNA synthetase family. Phe-tRNA synthetase alpha subunit type 1 subfamily. As to quaternary structure, tetramer of two alpha and two beta subunits. Mg(2+) is required as a cofactor.

The protein localises to the cytoplasm. The catalysed reaction is tRNA(Phe) + L-phenylalanine + ATP = L-phenylalanyl-tRNA(Phe) + AMP + diphosphate + H(+). The polypeptide is Phenylalanine--tRNA ligase alpha subunit (Aeromonas salmonicida (strain A449)).